We begin with the raw amino-acid sequence, 880 residues long: Interference hedgehog (880 aa).

A signal peptide spans 1 to 20 (MTLLTSSLLLFSLLTSRLEA). Residues 21-703 (IPVLEKSPAH…ETFNMSPMLT (683 aa)) are Extracellular-facing. Ig-like C2-type domains follow at residues 45 to 142 (PGVR…TARL), 155 to 232 (PESP…ERIQ), 252 to 340 (PHLL…YIKV), and 346 to 432 (PQIV…LQVN). 4 disulfide bridges follow: Cys-68-Cys-126, Cys-173-Cys-220, Cys-276-Cys-324, and Cys-367-Cys-414. 2 N-linked (GlcNAc...) asparagine glycosylation sites follow: Asn-102 and Asn-209. The interval 429–467 (LQVNPKQIQEPRESGGTHRPNPNQGSKHKQMYPPTPPNV) is disordered. Fibronectin type-III domains lie at 461-567 (PPTP…LQPG) and 575-670 (VPEL…TQRP). N-linked (GlcNAc...) asparagine glycosylation occurs at Asn-466. 4 residues coordinate heparin: Arg-497, Lys-501, Lys-503, and Arg-541. N-linked (GlcNAc...) asparagine glycosylation is present at Asn-557. Positions 662 to 692 (LKQGRTQRPKTSTTEEPTLQMGDRDTTTPSH) are disordered. Residues 665-678 (GRTQRPKTSTTEEP) are compositionally biased toward polar residues. N-linked (GlcNAc...) asparagine glycosylation occurs at Asn-693. A helical transmembrane segment spans residues 704–724 (GTIGGGAVLILLLISTCLCVC). Over 725-880 (RRRNSRSRGN…SSGSLNSVGV (156 aa)) the chain is Cytoplasmic. 2 disordered regions span residues 728-762 (NSRSRGNNPNKPRMAELRDDFVPLGNCSPTKQRQR) and 775-880 (QQQQ…SVGV). Low complexity-rich tracts occupy residues 823-837 (RAGGSNGSNNGNNNN) and 864-880 (SSRSENLSSGSLNSVGV).

The protein belongs to the immunoglobulin superfamily. IHOG family. As to quaternary structure, homodimer. Heterotetramer; 2 iHog chains bind 2 hh chains when facilitated by heparin, heparin is required to promote high-affinity interactions between hh and iHog.

Its subcellular location is the membrane. In terms of biological role, mediates response to the active Hedgehog (Hh) protein signal in embryos, functioning upstream or at the level of patched (ptc). This chain is Interference hedgehog, found in Drosophila simulans (Fruit fly).